The chain runs to 102 residues: Small ribosomal subunit protein uS10 (102 aa).

Belongs to the universal ribosomal protein uS10 family. As to quaternary structure, part of the 30S ribosomal subunit.

Involved in the binding of tRNA to the ribosomes. The polypeptide is Small ribosomal subunit protein uS10 (Kosmotoga olearia (strain ATCC BAA-1733 / DSM 21960 / TBF 19.5.1)).